Reading from the N-terminus, the 450-residue chain is Folate synthesis bifunctional protein (450 aa).

The interval 1–166 is HPPK; that stretch reads MTSWNFVCLS…TFAELAAIYP (166 aa). Positions 180-441 constitute a Pterin-binding domain; the sequence is TQIMGIVNIT…QVEGNRRALA (262 aa). The segment at 182–450 is DHPS; the sequence is IMGIVNITDN…AAAAWAGMFV (269 aa). Asn-187 lines the Mg(2+) pocket. Residues Thr-227, Asp-267, Asn-287, Asp-358, Lys-395, and 429 to 431 contribute to the (7,8-dihydropterin-6-yl)methyl diphosphate site; that span reads RVH.

The protein in the C-terminal section; belongs to the DHPS family. It in the N-terminal section; belongs to the HPPK family. The cofactor is Mg(2+).

The catalysed reaction is 6-hydroxymethyl-7,8-dihydropterin + ATP = (7,8-dihydropterin-6-yl)methyl diphosphate + AMP + H(+). It carries out the reaction (7,8-dihydropterin-6-yl)methyl diphosphate + 4-aminobenzoate = 7,8-dihydropteroate + diphosphate. The protein operates within cofactor biosynthesis; tetrahydrofolate biosynthesis; 2-amino-4-hydroxy-6-hydroxymethyl-7,8-dihydropteridine diphosphate from 7,8-dihydroneopterin triphosphate: step 4/4. Its pathway is cofactor biosynthesis; tetrahydrofolate biosynthesis; 7,8-dihydrofolate from 2-amino-4-hydroxy-6-hydroxymethyl-7,8-dihydropteridine diphosphate and 4-aminobenzoate: step 1/2. This chain is Folate synthesis bifunctional protein (folKP), found in Chlamydia trachomatis serovar D (strain ATCC VR-885 / DSM 19411 / UW-3/Cx).